Here is a 367-residue protein sequence, read N- to C-terminus: Leu/Ile/Val-binding protein (367 aa).

The signal sequence occupies residues 1–23 (MNIKGKALLAGCIALAFSNMALA). A disulfide bond links cysteine 76 and cysteine 101.

The protein belongs to the leucine-binding protein family.

It is found in the periplasm. Its function is as follows. This protein is a component of the leucine, isoleucine, valine, (threonine) transport system, which is one of the two periplasmic binding protein-dependent transport systems of the high-affinity transport of the branched-chain amino acids. The chain is Leu/Ile/Val-binding protein (livJ) from Escherichia coli O157:H7.